Reading from the N-terminus, the 222-residue chain is Prolactin-3B1 (222 aa).

An N-terminal signal peptide occupies residues 1-31; it reads MKLSLSQPCSFSGALLLLAVSNLLVWEKVTS. 2 disulfides stabilise this stretch: C82-C197 and C214-C222.

The protein belongs to the somatotropin/prolactin family.

It is found in the secreted. This is Prolactin-3B1 (Prl3b1) from Mus musculus (Mouse).